Reading from the N-terminus, the 638-residue chain is 1-deoxy-D-xylulose-5-phosphate synthase (638 aa).

Residues H81 and G122–S124 each bind thiamine diphosphate. D153 provides a ligand contact to Mg(2+). Residues G154 to S155, N182, Y293, and E377 contribute to the thiamine diphosphate site. Mg(2+) is bound at residue N182.

This sequence belongs to the transketolase family. DXPS subfamily. As to quaternary structure, homodimer. The cofactor is Mg(2+). Thiamine diphosphate serves as cofactor.

It carries out the reaction D-glyceraldehyde 3-phosphate + pyruvate + H(+) = 1-deoxy-D-xylulose 5-phosphate + CO2. The protein operates within metabolic intermediate biosynthesis; 1-deoxy-D-xylulose 5-phosphate biosynthesis; 1-deoxy-D-xylulose 5-phosphate from D-glyceraldehyde 3-phosphate and pyruvate: step 1/1. In terms of biological role, catalyzes the acyloin condensation reaction between C atoms 2 and 3 of pyruvate and glyceraldehyde 3-phosphate to yield 1-deoxy-D-xylulose-5-phosphate (DXP). The polypeptide is 1-deoxy-D-xylulose-5-phosphate synthase (Oleidesulfovibrio alaskensis (strain ATCC BAA-1058 / DSM 17464 / G20) (Desulfovibrio alaskensis)).